The sequence spans 91 residues: Small ribosomal subunit protein bS20 (91 aa).

The segment covering 1 to 21 (MPLHKSAEKRLRQSARRNERN) has biased composition (basic and acidic residues). 2 disordered regions span residues 1-25 (MPLH…RARK) and 70-91 (PNKA…MKAE). Positions 70–79 (PNKASRKKSQ) are enriched in basic residues.

The protein belongs to the bacterial ribosomal protein bS20 family.

Its function is as follows. Binds directly to 16S ribosomal RNA. This chain is Small ribosomal subunit protein bS20, found in Chlorobium phaeobacteroides (strain BS1).